The primary structure comprises 233 residues: Nickel import system ATP-binding protein NikE (233 aa).

One can recognise an ABC transporter domain in the interval 2–228; it reads IELKHVTFGY…DRHPYTKELV (227 aa). 35-42 serves as a coordination point for ATP; it reads GESGCGKS.

This sequence belongs to the ABC transporter superfamily. The complex is composed of two ATP-binding proteins (NikD and NikE), two transmembrane proteins (NikB and NikC) and a solute-binding protein (NikA).

Its subcellular location is the cell membrane. It catalyses the reaction Ni(2+)(out) + ATP + H2O = Ni(2+)(in) + ADP + phosphate + H(+). Functionally, part of the ABC transporter complex NikABCDE (Opp2) involved in nickel import. Probably responsible for energy coupling to the transport system. This is Nickel import system ATP-binding protein NikE from Staphylococcus aureus (strain Mu50 / ATCC 700699).